The sequence spans 297 residues: Calponin-1 (297 aa).

Residues H28–A131 form the Calponin-homology (CH) domain. Calponin-like repeat units lie at residues I164 to Y189, I204 to F229, and V243 to Y268. At T170 the chain carries Phosphothreonine; by ROCK2. S175 carries the post-translational modification Phosphoserine; by ROCK2. Residues T180 and T184 each carry the phosphothreonine; by ROCK2 modification. T259 carries the post-translational modification Phosphothreonine; by ROCK2.

The protein belongs to the calponin family. As to quaternary structure, part of cGMP kinase signaling complex at least composed of ACTA2/alpha-actin, CNN1/calponin H1, PLN/phospholamban, PRKG1 and ITPR1. As to expression, smooth muscle, and tissues containing significant amounts of smooth muscle.

Functionally, thin filament-associated protein that is implicated in the regulation and modulation of smooth muscle contraction. It is capable of binding to actin, calmodulin and tropomyosin. The interaction of calponin with actin inhibits the actomyosin Mg-ATPase activity. This is Calponin-1 (CNN1) from Homo sapiens (Human).